We begin with the raw amino-acid sequence, 695 residues long: Putative ATP-dependent DNA helicase R568 (695 aa).

A UvrD-like helicase ATP-binding domain is found at 86 to 499 (KFSEEQIKYI…FRNEEIFDSN (414 aa)). 107-114 (ACAGSGKT) contributes to the ATP binding site.

The protein belongs to the helicase family. UvrD subfamily.

The enzyme catalyses Couples ATP hydrolysis with the unwinding of duplex DNA by translocating in the 3'-5' direction.. It carries out the reaction ATP + H2O = ADP + phosphate + H(+). In terms of biological role, ATP-dependent DNA helicase. This chain is Putative ATP-dependent DNA helicase R568, found in Acanthamoeba polyphaga mimivirus (APMV).